A 378-amino-acid polypeptide reads, in one-letter code: Cytochrome b (378 aa).

The next 4 helical transmembrane spans lie at 34-54 (FGSL…FLAM), 78-99 (WLLR…YLHV), 114-134 (WLIG…GYVL), and 179-199 (FFTF…IHLL). Heme b is bound by residues His-84 and His-98. Residues His-183 and His-197 each coordinate heme b. Residue His-202 participates in a ubiquinone binding. The next 4 helical transmembrane spans lie at 227-247 (FKDI…VLIS), 289-309 (LGGV…PFYN), 321-341 (INQV…WIGA), and 348-368 (YVLI…VNPL).

The protein belongs to the cytochrome b family. In terms of assembly, the main subunits of complex b-c1 are: cytochrome b, cytochrome c1 and the Rieske protein. Heme b serves as cofactor.

The protein localises to the mitochondrion inner membrane. Component of the ubiquinol-cytochrome c reductase complex (complex III or cytochrome b-c1 complex) that is part of the mitochondrial respiratory chain. The b-c1 complex mediates electron transfer from ubiquinol to cytochrome c. Contributes to the generation of a proton gradient across the mitochondrial membrane that is then used for ATP synthesis. This chain is Cytochrome b (mt:Cyt-b), found in Drosophila sechellia (Fruit fly).